The sequence spans 519 residues: Ribose import ATP-binding protein RbsA 2 (519 aa).

ABC transporter domains follow at residues 15-252 (FRLR…VGRP) and 262-506 (HEPG…TGVR). 47 to 54 (GENGAGKS) is a binding site for ATP.

Belongs to the ABC transporter superfamily. Ribose importer (TC 3.A.1.2.1) family. The complex is composed of an ATP-binding protein (RbsA), two transmembrane proteins (RbsC) and a solute-binding protein (RbsB).

It localises to the cell membrane. The catalysed reaction is D-ribose(out) + ATP + H2O = D-ribose(in) + ADP + phosphate + H(+). In terms of biological role, part of the ABC transporter complex RbsABC involved in ribose import. Responsible for energy coupling to the transport system. The chain is Ribose import ATP-binding protein RbsA 2 from Rubrobacter xylanophilus (strain DSM 9941 / JCM 11954 / NBRC 16129 / PRD-1).